The sequence spans 354 residues: Thiamine thiazole synthase (354 aa).

Substrate is bound by residues Ala-83, 104–105 (EA), Gly-112, and Val-177. At Cys-210 the chain carries 2,3-didehydroalanine (Cys). Substrate contacts are provided by residues Asp-212, His-227, Met-305, and 315-317 (RMG).

The protein belongs to the THI4 family. As to quaternary structure, homooctamer. Requires Fe cation as cofactor. Post-translationally, during the catalytic reaction, a sulfide is transferred from Cys-210 to a reaction intermediate, generating a dehydroalanine residue.

Its subcellular location is the cytoplasm. The protein localises to the nucleus. It catalyses the reaction [ADP-thiazole synthase]-L-cysteine + glycine + NAD(+) = [ADP-thiazole synthase]-dehydroalanine + ADP-5-ethyl-4-methylthiazole-2-carboxylate + nicotinamide + 3 H2O + 2 H(+). In terms of biological role, involved in biosynthesis of the thiamine precursor thiazole. Catalyzes the conversion of NAD and glycine to adenosine diphosphate 5-(2-hydroxyethyl)-4-methylthiazole-2-carboxylic acid (ADT), an adenylated thiazole intermediate. The reaction includes an iron-dependent sulfide transfer from a conserved cysteine residue of the protein to a thiazole intermediate. The enzyme can only undergo a single turnover, which suggests it is a suicide enzyme. May have additional roles in adaptation to various stress conditions and in DNA damage tolerance. This Candida albicans (strain SC5314 / ATCC MYA-2876) (Yeast) protein is Thiamine thiazole synthase.